Reading from the N-terminus, the 293-residue chain is RNA-binding Raly-like protein (293 aa).

Residues 21–92 (SRVFIGNLNT…QPLDINMAGE (72 aa)) enclose the RRM domain. Disordered stretches follow at residues 159–195 (PRAA…KLKS) and 245–293 (QDEC…LQIK). Positions 176-192 (KGGSRSAVSGSSSSGSK) are enriched in low complexity. Positions 192–254 (KLKSDELQTI…QDECVSENAD (63 aa)) form a coiled coil. Residues 259–284 (EPAEGAPDADGEELTDGVEEDFDEDG) are compositionally biased toward acidic residues.

Belongs to the RRM HNRPC family. RALY subfamily.

The sequence is that of RNA-binding Raly-like protein (RALYL) from Bos taurus (Bovine).